We begin with the raw amino-acid sequence, 382 residues long: Protein RecA (382 aa).

79 to 86 lines the ATP pocket; it reads GPESSGKT. The disordered stretch occupies residues 362 to 382; that stretch reads ATKSAAKGSEVQADVKTKGAA.

Belongs to the RecA family.

It localises to the cytoplasm. Its function is as follows. Can catalyze the hydrolysis of ATP in the presence of single-stranded DNA, the ATP-dependent uptake of single-stranded DNA by duplex DNA, and the ATP-dependent hybridization of homologous single-stranded DNAs. It interacts with LexA causing its activation and leading to its autocatalytic cleavage. In Synechococcus sp. (strain WH7803), this protein is Protein RecA.